The sequence spans 743 residues: GTPase-activating protein gyp7 (743 aa).

In terms of domain architecture, Rab-GAP TBC spans 411 to 633 (GIQPSLRKEV…KLWDVLFTNY (223 aa)).

The protein resides in the cytoplasm. Its subcellular location is the nucleus. Most effectively accelerates the intrinsic GTPase activity of ypt7. This Schizosaccharomyces pombe (strain 972 / ATCC 24843) (Fission yeast) protein is GTPase-activating protein gyp7.